Here is a 251-residue protein sequence, read N- to C-terminus: Hydroxyacylglutathione hydrolase (251 aa).

Residues His53, His55, Asp57, His58, His110, Asp127, and His165 each coordinate Zn(2+).

The protein belongs to the metallo-beta-lactamase superfamily. Glyoxalase II family. In terms of assembly, monomer. Requires Zn(2+) as cofactor.

The catalysed reaction is an S-(2-hydroxyacyl)glutathione + H2O = a 2-hydroxy carboxylate + glutathione + H(+). It functions in the pathway secondary metabolite metabolism; methylglyoxal degradation; (R)-lactate from methylglyoxal: step 2/2. Thiolesterase that catalyzes the hydrolysis of S-D-lactoyl-glutathione to form glutathione and D-lactic acid. The polypeptide is Hydroxyacylglutathione hydrolase (Escherichia coli O81 (strain ED1a)).